A 204-amino-acid polypeptide reads, in one-letter code: Double homeobox protein A (204 aa).

A DNA-binding region (homeobox 1) is located at residues 15–74 (HRRCRTKFTEEQLKILINTFNQKPYPGYATKQKLALEINTEESRIQIWFQNRRARHGFQK). 2 disordered regions span residues 73–101 (QKRPEAETLESSQSQGQDQPGVEFQSREA) and 163–204 (EPVA…ARTW). Over residues 81-90 (LESSQSQGQD) the composition is skewed to polar residues. The segment at residues 101-160 (ARRCRTTYSASQLHTLIKAFMKNPYPGIDSREELAKEIGVPESRVQIWFQNRRSRLLLQR) is a DNA-binding region (homeobox 2). Polar residues predominate over residues 184-197 (EDTQNGTNFTSDSH).

Belongs to the paired homeobox family. In terms of tissue distribution, expressed in embryonic stem cells.

The protein localises to the nucleus. In terms of biological role, transcription factor that acts as a repressor. This is Double homeobox protein A from Homo sapiens (Human).